Here is a 511-residue protein sequence, read N- to C-terminus: 2,3-bisphosphoglycerate-independent phosphoglycerate mutase (511 aa).

D12 provides a ligand contact to Mn(2+). Position 36 is a phosphotyrosine (Y36). S62 contacts Mn(2+). The active-site Phosphoserine intermediate is the S62. Substrate-binding positions include H123, R153–D154, R185, R191, R261–R264, and K336. Positions 403, 407, 444, 445, and 462 each coordinate Mn(2+).

Belongs to the BPG-independent phosphoglycerate mutase family. As to quaternary structure, monomer. Mn(2+) is required as a cofactor.

It catalyses the reaction (2R)-2-phosphoglycerate = (2R)-3-phosphoglycerate. It participates in carbohydrate degradation; glycolysis; pyruvate from D-glyceraldehyde 3-phosphate: step 3/5. Functionally, catalyzes the interconversion of 2-phosphoglycerate and 3-phosphoglycerate. This is 2,3-bisphosphoglycerate-independent phosphoglycerate mutase from Geobacillus thermodenitrificans (strain NG80-2).